Consider the following 367-residue polypeptide: Uroporphyrinogen decarboxylase (367 aa).

M1 carries the N-acetylmethionine modification. The coproporphyrinogen I site is built by R37, A39, R41, R50, D86, Y164, S219, and H339. R37, A39, and R41 together coordinate coproporphyrinogen III. Coproporphyrinogen III contacts are provided by D86, Y164, S219, and H339.

It belongs to the uroporphyrinogen decarboxylase family. In terms of assembly, homodimer.

The protein localises to the cytoplasm. It localises to the cytosol. The enzyme catalyses uroporphyrinogen III + 4 H(+) = coproporphyrinogen III + 4 CO2. It catalyses the reaction uroporphyrinogen I + 4 H(+) = coproporphyrinogen I + 4 CO2. It functions in the pathway porphyrin-containing compound metabolism; protoporphyrin-IX biosynthesis; coproporphyrinogen-III from 5-aminolevulinate: step 4/4. Its function is as follows. Catalyzes the sequential decarboxylation of the four acetate side chains of uroporphyrinogen to form coproporphyrinogen and participates in the fifth step in the heme biosynthetic pathway. Isomer I or isomer III of uroporphyrinogen may serve as substrate, but only coproporphyrinogen III can ultimately be converted to heme. In vitro also decarboxylates pentacarboxylate porphyrinogen I. The polypeptide is Uroporphyrinogen decarboxylase (Mus musculus (Mouse)).